We begin with the raw amino-acid sequence, 48 residues long: Large ribosomal subunit protein bL33A (48 aa).

Belongs to the bacterial ribosomal protein bL33 family.

The sequence is that of Large ribosomal subunit protein bL33A from Metamycoplasma arthritidis (strain 158L3-1) (Mycoplasma arthritidis).